We begin with the raw amino-acid sequence, 103 residues long: Pyrimidine/purine nucleoside phosphorylase (103 aa).

Belongs to the nucleoside phosphorylase PpnP family.

The enzyme catalyses a purine D-ribonucleoside + phosphate = a purine nucleobase + alpha-D-ribose 1-phosphate. It carries out the reaction adenosine + phosphate = alpha-D-ribose 1-phosphate + adenine. The catalysed reaction is cytidine + phosphate = cytosine + alpha-D-ribose 1-phosphate. It catalyses the reaction guanosine + phosphate = alpha-D-ribose 1-phosphate + guanine. The enzyme catalyses inosine + phosphate = alpha-D-ribose 1-phosphate + hypoxanthine. It carries out the reaction thymidine + phosphate = 2-deoxy-alpha-D-ribose 1-phosphate + thymine. The catalysed reaction is uridine + phosphate = alpha-D-ribose 1-phosphate + uracil. It catalyses the reaction xanthosine + phosphate = alpha-D-ribose 1-phosphate + xanthine. Catalyzes the phosphorolysis of diverse nucleosides, yielding D-ribose 1-phosphate and the respective free bases. Can use uridine, adenosine, guanosine, cytidine, thymidine, inosine and xanthosine as substrates. Also catalyzes the reverse reactions. The polypeptide is Pyrimidine/purine nucleoside phosphorylase (Shewanella baltica (strain OS195)).